The primary structure comprises 657 residues: Glycogen debranching enzyme (657 aa).

Catalysis depends on Asp336, which acts as the Nucleophile. Catalysis depends on Glu371, which acts as the Proton donor. Positions 460 to 479 are disordered; the sequence is ANGEENRDGTNNNYSNNHGK.

This sequence belongs to the glycosyl hydrolase 13 family.

It catalyses the reaction Hydrolysis of (1-&gt;6)-alpha-D-glucosidic linkages to branches with degrees of polymerization of three or four glucose residues in limit dextrin.. Its pathway is glycan degradation; glycogen degradation. Removes maltotriose and maltotetraose chains that are attached by 1,6-alpha-linkage to the limit dextrin main chain, generating a debranched limit dextrin. The chain is Glycogen debranching enzyme from Escherichia coli O6:K15:H31 (strain 536 / UPEC).